The sequence spans 497 residues: uncharacterized protein (497 aa).

2 ABC transporter domains span residues 9–247 (VSVR…MGQA) and 256–496 (ARPA…TGMA). 41-48 (GGNGAGKS) provides a ligand contact to ATP.

Belongs to the ABC transporter superfamily. Ribose importer (TC 3.A.1.2.1) family.

It localises to the cell membrane. In terms of biological role, probably part of the binding-protein-dependent transport system y4mIJK. This system probably transports a sugar. Probably responsible for energy coupling to the transport system. This is an uncharacterized protein from Sinorhizobium fredii (strain NBRC 101917 / NGR234).